The primary structure comprises 1295 residues: MLVLRGAPALSEFRTKKLMQSIEALNLPVHALFAEFVHFAQVSAQLEANDQQVLDKLLTYGPKIQEKQHKGLLLLVIPRAGTISPWSSKATDIAHNCGLNNVERLERGCAFYIDADPLNDTQLIQLKNVLHDRMTQSVVSDLQDASILFKHEAPKPLTSIDVLGGGREELVSANVRLGLALAEDEVDYLVSSFEKLGRNPNDIELYMFAQANSEHCRHKIFNADWTIDGQTQPKSLFKMIKNTYEKCPDYVHSAYADNAAVMEGSFAGRFFPQADNNQYRYHHEDIDILMKVETHNHPTAIAPFSGAATGSGGEIRDEGATGRGSKPKAGLVGFSVSNLRIPGFEQPWENDYGKPERIVTAFDIMLNGPLGGAAFNNEFGRPNILGYFRTYEQKVTSFNGEEVRGYHKPIMLAGGLGNIRKQHTQKGEITVGAKLIALGGPAMNIGLGGGAASSMASGESNEDLDFASVQRDNPEMERRCQEVIDKCWQLGENNPIQFIHDVGAGGLSNAFPELVNDGGRGAVFSLRNVPNDEPGMTPLEVWCNESQERYVMSVAPENLATFTDICARERAPFAVVGEATQARHLTLDDSHFNNKPIDMPLDVLLGKAPKMHRDVQSKALTGNAFDVSNIDLDEAALRLLHLPAVAEKTFLITIGDRSVTGLVNRDQMVGPWQIPVADVAVTAAAFDTYQGEAMSLGERTPAALLNYGASARLAVGEALTNIAAADIGDLKRIKLSANWMAAAGHPGEDAGLYEAVKAVGEELCPALGLTIPVGKDSMSMKTQWQDAQGDKAVTSPMSLVITAFGAVKDVRKTLTPELTTKGDTCLMLIDLGAGQNRMGASCLAQVYQQLGDKTPDVDSPELLKGFFLAIQQLVNEKALHAYHDRSDGGLFTTLVEMAFAGNTGLDIKLDALTGDNASALFNEELGAVIQFDADKLNQVDAILAANGLSGVSHVIGTLSDDDQIRFSREGEPVLQNSRGVYRNAWAQTTHHMQRLRDNPECAEQELASKNDLNNPGLHAALSFDVTEDVAAPYIAKGIAPKMAILREQGVNSHVEMAAAFDRAGFASVDVHMSDILAGRVSLSEFQGLVACGGFSYGDVLGAGEGWAKSILFNAMARDEFSAFFERNETFSLGVCNGCQMLSNLKSLIPGAEHWPHFVTNQSERFEARVAMLEVKDSPSIFFKGMQGSKMPIAVSHGEGRAEFAQTTGLEAALDSNTIALQYVDNYGKVTEQYPANPNGSPAGISGLTSKDGRATIMMPHPERVFRTVANSWHPDDWQEDSPWMRMFRNARVYLG.

The tract at residues 302–327 (APFSGAATGSGGEIRDEGATGRGSKP) is disordered. ATP contacts are provided by residues 306–317 (GAATGSGGEIRD) and alanine 677. The Mg(2+) site is built by aspartate 678, glutamate 717, asparagine 721, and aspartate 884. Serine 886 contacts ATP. Residues 1042 to 1295 (MAILREQGVN…MFRNARVYLG (254 aa)) enclose the Glutamine amidotransferase type-1 domain. Cysteine 1135 (nucleophile) is an active-site residue. Residues histidine 1260 and glutamate 1262 contribute to the active site.

The protein in the N-terminal section; belongs to the FGAMS family. In terms of assembly, monomer.

It is found in the cytoplasm. It catalyses the reaction N(2)-formyl-N(1)-(5-phospho-beta-D-ribosyl)glycinamide + L-glutamine + ATP + H2O = 2-formamido-N(1)-(5-O-phospho-beta-D-ribosyl)acetamidine + L-glutamate + ADP + phosphate + H(+). The protein operates within purine metabolism; IMP biosynthesis via de novo pathway; 5-amino-1-(5-phospho-D-ribosyl)imidazole from N(2)-formyl-N(1)-(5-phospho-D-ribosyl)glycinamide: step 1/2. Its function is as follows. Phosphoribosylformylglycinamidine synthase involved in the purines biosynthetic pathway. Catalyzes the ATP-dependent conversion of formylglycinamide ribonucleotide (FGAR) and glutamine to yield formylglycinamidine ribonucleotide (FGAM) and glutamate. This chain is Phosphoribosylformylglycinamidine synthase, found in Pseudoalteromonas atlantica (strain T6c / ATCC BAA-1087).